A 224-amino-acid chain; its full sequence is Lipoprotein-releasing system ATP-binding protein LolD (224 aa).

Residues 6-224 (LEFCNVSKFF…IVNHSLISSI (219 aa)) form the ABC transporter domain. Residue 43–50 (GASGVGKT) participates in ATP binding.

This sequence belongs to the ABC transporter superfamily. Lipoprotein translocase (TC 3.A.1.125) family. In terms of assembly, the complex is composed of two ATP-binding proteins (LolD) and two transmembrane proteins (LolC and LolE).

The protein resides in the cell inner membrane. Part of the ABC transporter complex LolCDE involved in the translocation of mature outer membrane-directed lipoproteins, from the inner membrane to the periplasmic chaperone, LolA. Responsible for the formation of the LolA-lipoprotein complex in an ATP-dependent manner. This is Lipoprotein-releasing system ATP-binding protein LolD from Neorickettsia sennetsu (strain ATCC VR-367 / Miyayama) (Ehrlichia sennetsu).